The sequence spans 244 residues: Ureidoacrylate amidohydrolase RutB (244 aa).

D38 (proton acceptor) is an active-site residue. K147 is a catalytic residue. C180 (nucleophile) is an active-site residue.

Belongs to the isochorismatase family. RutB subfamily.

It carries out the reaction (Z)-3-ureidoacrylate + H2O + H(+) = (Z)-3-aminoacrylate + NH4(+) + CO2. The enzyme catalyses (Z)-3-ureidoacrylate + H2O = (Z)-3-aminoacrylate + carbamate + H(+). The catalysed reaction is (Z)-2-methylureidoacrylate + H2O + H(+) = (Z)-2-methylaminoacrylate + NH4(+) + CO2. Hydrolyzes ureidoacrylate to form aminoacrylate and carbamate. The carbamate hydrolyzes spontaneously, thereby releasing one of the nitrogen atoms of the pyrimidine ring as ammonia and one of its carbon atoms as CO2. The polypeptide is Ureidoacrylate amidohydrolase RutB (Escherichia coli O1:K1 / APEC).